Here is a 238-residue protein sequence, read N- to C-terminus: 2-C-methyl-D-erythritol 4-phosphate cytidylyltransferase (238 aa).

It belongs to the IspD/TarI cytidylyltransferase family. IspD subfamily.

It carries out the reaction 2-C-methyl-D-erythritol 4-phosphate + CTP + H(+) = 4-CDP-2-C-methyl-D-erythritol + diphosphate. The protein operates within isoprenoid biosynthesis; isopentenyl diphosphate biosynthesis via DXP pathway; isopentenyl diphosphate from 1-deoxy-D-xylulose 5-phosphate: step 2/6. Its function is as follows. Catalyzes the formation of 4-diphosphocytidyl-2-C-methyl-D-erythritol from CTP and 2-C-methyl-D-erythritol 4-phosphate (MEP). The protein is 2-C-methyl-D-erythritol 4-phosphate cytidylyltransferase of Aliivibrio fischeri (strain MJ11) (Vibrio fischeri).